The sequence spans 465 residues: tRNA modification GTPase MnmE (465 aa).

The (6S)-5-formyl-5,6,7,8-tetrahydrofolate site is built by R24, E84, and K127. A TrmE-type G domain is found at 223–383 (GLNIVLAGQP…LRGELLRLIG (161 aa)). N233 provides a ligand contact to K(+). Residues 233-238 (NVGKSS), 252-258 (TAIAGTT), and 277-280 (DTAG) contribute to the GTP site. S237 provides a ligand contact to Mg(2+). Positions 252, 254, and 257 each coordinate K(+). T258 contacts Mg(2+). K465 serves as a coordination point for (6S)-5-formyl-5,6,7,8-tetrahydrofolate.

The protein belongs to the TRAFAC class TrmE-Era-EngA-EngB-Septin-like GTPase superfamily. TrmE GTPase family. As to quaternary structure, homodimer. Heterotetramer of two MnmE and two MnmG subunits. K(+) is required as a cofactor.

It localises to the cytoplasm. Its function is as follows. Exhibits a very high intrinsic GTPase hydrolysis rate. Involved in the addition of a carboxymethylaminomethyl (cmnm) group at the wobble position (U34) of certain tRNAs, forming tRNA-cmnm(5)s(2)U34. This chain is tRNA modification GTPase MnmE, found in Janthinobacterium sp. (strain Marseille) (Minibacterium massiliensis).